The following is a 218-amino-acid chain: Serine/threonine-protein phosphatase 2 (218 aa).

Residues D22, H24, D51, and N77 each contribute to the Mn(2+) site. H78 (proton donor) is an active-site residue. H187 serves as a coordination point for Mn(2+).

Belongs to the PPP phosphatase family. Mn(2+) serves as cofactor.

It catalyses the reaction O-phospho-L-seryl-[protein] + H2O = L-seryl-[protein] + phosphate. The enzyme catalyses O-phospho-L-threonyl-[protein] + H2O = L-threonyl-[protein] + phosphate. Its function is as follows. Has been shown, in vitro, to act on Ser, Thr and Tyr-phosphorylated substrates. The sequence is that of Serine/threonine-protein phosphatase 2 (pphB) from Escherichia coli (strain K12).